The chain runs to 505 residues: MAESAGASSFFPLVVLLLAGSGGSGPRGVQALLCACTSCLQANYTCETDGACMVSIFNLDGMEHHVRTCIPKVELVPAGKPFYCLSSEDLRNTHCCYTDYCNRIDLRVPSGHLKEPEHPSMWGPVELVGIIAGPVFLLFLIIIIVFLVINYHQRVYHNRQRLDMEDPSCEMCLSKDKTLQDLVYDLSTSGSGSGLPLFVQRTVARTIVLQEIIGKGRFGEVWRGRWRGGDVAVKIFSSREERSWFREAEIYQTVMLRHENILGFIAADNKDNGTWTQLWLVSDYHEHGSLFDYLNRYTVTIEGMIKLALSAASGLAHLHMEIVGTQGKPGIAHRDLKSKNILVKKNGMCAIADLGLAVRHDAVTDTIDIAPNQRVGTKRYMAPEVLDETINMKHFDSFKCADIYALGLVYWEIARRCNSGGVHEEYQLPYYDLVPSDPSIEEMRKVVCDQKLRPNIPNWWQSYEALRVMGKMMRECWYANGAARLTALRIKKTLSQLSVQEDVKI.

A signal peptide spans 1–23 (MAESAGASSFFPLVVLLLAGSGG). Residues 24-126 (SGPRGVQALL…EHPSMWGPVE (103 aa)) are Extracellular-facing. The N-linked (GlcNAc...) asparagine glycan is linked to Asn43. The chain crosses the membrane as a helical span at residues 127–149 (LVGIIAGPVFLLFLIIIIVFLVI). Over 150 to 505 (NYHQRVYHNR…QLSVQEDVKI (356 aa)) the chain is Cytoplasmic. The GS domain maps to 177–206 (KTLQDLVYDLSTSGSGSGLPLFVQRTVART). The Protein kinase domain maps to 207-497 (IVLQEIIGKG…LRIKKTLSQL (291 aa)). ATP is bound by residues 213–221 (IGKGRFGEV) and Lys234. The active-site Proton acceptor is Asp335. Position 380 is a phosphotyrosine (Tyr380).

The protein belongs to the protein kinase superfamily. TKL Ser/Thr protein kinase family. TGFB receptor subfamily. In terms of assembly, forms an activin receptor complex with activin receptor type-2 (ACVR2A or ACVR2B). Part of a complex consisting of MAGI2/ARIP1, ACVR2A, ACVR1B and SMAD3. Interacts with SMAD2 and SMAD3. Interacts with SMAD7. Interacts with FKBP1A. Interacts with IGSF1. Interacts with CRIPTO. Interacts with TDP2. Interacts with TSC22D1/TSC-22. Mg(2+) serves as cofactor. The cofactor is Mn(2+). Autophosphorylated. Phosphorylated by activin receptor type-2 (ACVR2A or ACVR2B) in response to activin-binding at serine and threonine residues in the GS domain. Phosphorylation of ACVR1B by activin receptor type-2 regulates association with SMAD7. In terms of processing, ubiquitinated. Level of ubiquitination is regulated by the SMAD7-SMURF1 complex. Post-translationally, ubiquitinated. As to expression, expressed in many tissues, most strongly in kidney, pancreas, brain, lung, and liver.

The protein resides in the cell membrane. It catalyses the reaction L-threonyl-[receptor-protein] + ATP = O-phospho-L-threonyl-[receptor-protein] + ADP + H(+). The enzyme catalyses L-seryl-[receptor-protein] + ATP = O-phospho-L-seryl-[receptor-protein] + ADP + H(+). Activin receptor type-2 (ACVR2A or ACVR2B) activates the type-1 receptor through phosphorylation of its regulatory GS domain. Its function is as follows. Transmembrane serine/threonine kinase activin type-1 receptor forming an activin receptor complex with activin receptor type-2 (ACVR2A or ACVR2B). Transduces the activin signal from the cell surface to the cytoplasm and is thus regulating a many physiological and pathological processes including neuronal differentiation and neuronal survival, hair follicle development and cycling, FSH production by the pituitary gland, wound healing, extracellular matrix production, immunosuppression and carcinogenesis. Activin is also thought to have a paracrine or autocrine role in follicular development in the ovary. Within the receptor complex, type-2 receptors (ACVR2A and/or ACVR2B) act as a primary activin receptors whereas the type-1 receptors like ACVR1B act as downstream transducers of activin signals. Activin binds to type-2 receptor at the plasma membrane and activates its serine-threonine kinase. The activated receptor type-2 then phosphorylates and activates the type-1 receptor such as ACVR1B. Once activated, the type-1 receptor binds and phosphorylates the SMAD proteins SMAD2 and SMAD3, on serine residues of the C-terminal tail. Soon after their association with the activin receptor and subsequent phosphorylation, SMAD2 and SMAD3 are released into the cytoplasm where they interact with the common partner SMAD4. This SMAD complex translocates into the nucleus where it mediates activin-induced transcription. Inhibitory SMAD7, which is recruited to ACVR1B through FKBP1A, can prevent the association of SMAD2 and SMAD3 with the activin receptor complex, thereby blocking the activin signal. Activin signal transduction is also antagonized by the binding to the receptor of inhibin-B via the IGSF1 inhibin coreceptor. ACVR1B also phosphorylates TDP2. This chain is Activin receptor type-1B (ACVR1B), found in Homo sapiens (Human).